Here is a 227-residue protein sequence, read N- to C-terminus: ATP synthase subunit delta (227 aa).

The protein belongs to the ATPase delta chain family. F-type ATPases have 2 components, F(1) - the catalytic core - and F(0) - the membrane proton channel. F(1) has five subunits: alpha(3), beta(3), gamma(1), delta(1), epsilon(1). F(0) has three main subunits: a(1), b(2) and c(10-14). The alpha and beta chains form an alternating ring which encloses part of the gamma chain. F(1) is attached to F(0) by a central stalk formed by the gamma and epsilon chains, while a peripheral stalk is formed by the delta and b chains.

It localises to the cell inner membrane. Functionally, f(1)F(0) ATP synthase produces ATP from ADP in the presence of a proton or sodium gradient. F-type ATPases consist of two structural domains, F(1) containing the extramembraneous catalytic core and F(0) containing the membrane proton channel, linked together by a central stalk and a peripheral stalk. During catalysis, ATP synthesis in the catalytic domain of F(1) is coupled via a rotary mechanism of the central stalk subunits to proton translocation. Its function is as follows. This protein is part of the stalk that links CF(0) to CF(1). It either transmits conformational changes from CF(0) to CF(1) or is implicated in proton conduction. In Rhodopirellula baltica (strain DSM 10527 / NCIMB 13988 / SH1), this protein is ATP synthase subunit delta.